The following is a 228-amino-acid chain: Cytochrome c oxidase subunit 2 (228 aa).

Residues 1–26 are Mitochondrial intermembrane-facing; the sequence is MSQWFQLGLQNGNSPLMEQLIFFHDH. The chain crosses the membrane as a helical span at residues 27–48; that stretch reads ALLVVILITSLVGFFLAALFSN. The Mitochondrial matrix segment spans residues 49 to 62; sequence KFLHRYLLDGQAIE. Residues 63 to 82 traverse the membrane as a helical segment; it reads TVWTVIPAIILVAIALPSIR. Residues 83 to 228 lie on the Mitochondrial intermembrane side of the membrane; sequence LLYLIDEIHN…FLKWLELQIS (146 aa). Positions 161, 196, 198, 200, 204, and 207 each coordinate Cu cation. Residue Glu-198 participates in Mg(2+) binding.

It belongs to the cytochrome c oxidase subunit 2 family. As to quaternary structure, component of the cytochrome c oxidase (complex IV, CIV), a multisubunit enzyme composed of a catalytic core of 3 subunits and several supernumerary subunits. The complex exists as a monomer or a dimer and forms supercomplexes (SCs) in the inner mitochondrial membrane with ubiquinol-cytochrome c oxidoreductase (cytochrome b-c1 complex, complex III, CIII). Cu cation is required as a cofactor.

It localises to the mitochondrion inner membrane. The catalysed reaction is 4 Fe(II)-[cytochrome c] + O2 + 8 H(+)(in) = 4 Fe(III)-[cytochrome c] + 2 H2O + 4 H(+)(out). Functionally, component of the cytochrome c oxidase, the last enzyme in the mitochondrial electron transport chain which drives oxidative phosphorylation. The respiratory chain contains 3 multisubunit complexes succinate dehydrogenase (complex II, CII), ubiquinol-cytochrome c oxidoreductase (cytochrome b-c1 complex, complex III, CIII) and cytochrome c oxidase (complex IV, CIV), that cooperate to transfer electrons derived from NADH and succinate to molecular oxygen, creating an electrochemical gradient over the inner membrane that drives transmembrane transport and the ATP synthase. Cytochrome c oxidase is the component of the respiratory chain that catalyzes the reduction of oxygen to water. Electrons originating from reduced cytochrome c in the intermembrane space (IMS) are transferred via the dinuclear copper A center (CU(A)) of subunit 2 and heme A of subunit 1 to the active site in subunit 1, a binuclear center (BNC) formed by heme A3 and copper B (CU(B)). The BNC reduces molecular oxygen to 2 water molecules using 4 electrons from cytochrome c in the IMS and 4 protons from the mitochondrial matrix. The protein is Cytochrome c oxidase subunit 2 (COII) of Artemia franciscana (Brine shrimp).